Consider the following 167-residue polypeptide: Small ribosomal subunit protein uS9 (167 aa).

Residues 1–41 form a disordered region; that stretch reads MNTEAVAPDVAEEEVLTSYTSESSASADDAPKKERPALTVS. Polar residues predominate over residues 17 to 26; it reads TSYTSESSAS.

The protein belongs to the universal ribosomal protein uS9 family.

In Renibacterium salmoninarum (strain ATCC 33209 / DSM 20767 / JCM 11484 / NBRC 15589 / NCIMB 2235), this protein is Small ribosomal subunit protein uS9.